The chain runs to 175 residues: ADP-ribosylation factor 6 (175 aa).

Glycine 2 carries the N-myristoyl glycine lipid modification. Lysine 3 is lipidated: N6-myristoyl lysine. GTP-binding positions include 23–28 (AAGKTT), 41–44 (TIPT), 63–67 (DVGGQ), 122–125 (NKQD), and 155–156 (CA).

Belongs to the small GTPase superfamily. Arf family.

Its subcellular location is the cytoplasm. The protein resides in the cytosol. It is found in the cell membrane. The protein localises to the endosome membrane. It localises to the recycling endosome membrane. Its subcellular location is the cell projection. The protein resides in the filopodium membrane. It is found in the ruffle. The protein localises to the cleavage furrow. It localises to the midbody. Its subcellular location is the midbody ring. The protein resides in the golgi apparatus. It carries out the reaction GTP + H2O = GDP + phosphate + H(+). GTP-binding protein involved in protein trafficking; regulates endocytic recycling and cytoskeleton remodeling. May modulate vesicle budding and uncoating within the Golgi apparatus. May contribute to the regulation of dendritic branching, filopodia extension and dendritic spine development. The protein is ADP-ribosylation factor 6 (arf6) of Xenopus laevis (African clawed frog).